Consider the following 414-residue polypeptide: Enolase (414 aa).

Residue Q162 coordinates (2R)-2-phosphoglycerate. E204 serves as the catalytic Proton donor. D239, E280, and D307 together coordinate Mg(2+). K332, R361, S362, and K383 together coordinate (2R)-2-phosphoglycerate. The active-site Proton acceptor is K332.

The protein belongs to the enolase family. Requires Mg(2+) as cofactor.

It is found in the cytoplasm. Its subcellular location is the secreted. It localises to the cell surface. The enzyme catalyses (2R)-2-phosphoglycerate = phosphoenolpyruvate + H2O. Its pathway is carbohydrate degradation; glycolysis; pyruvate from D-glyceraldehyde 3-phosphate: step 4/5. In terms of biological role, catalyzes the reversible conversion of 2-phosphoglycerate (2-PG) into phosphoenolpyruvate (PEP). It is essential for the degradation of carbohydrates via glycolysis. This Campylobacter jejuni subsp. jejuni serotype O:2 (strain ATCC 700819 / NCTC 11168) protein is Enolase.